A 274-amino-acid chain; its full sequence is Orotidine 5'-phosphate decarboxylase (274 aa).

The active-site Proton donor is the K96.

The protein belongs to the OMP decarboxylase family. Type 2 subfamily.

It carries out the reaction orotidine 5'-phosphate + H(+) = UMP + CO2. Its pathway is pyrimidine metabolism; UMP biosynthesis via de novo pathway; UMP from orotate: step 2/2. In Bacteroides fragilis (strain YCH46), this protein is Orotidine 5'-phosphate decarboxylase.